Reading from the N-terminus, the 223-residue chain is RNA-free ribonuclease P (223 aa).

This sequence belongs to the HARP family.

The catalysed reaction is Endonucleolytic cleavage of RNA, removing 5'-extranucleotides from tRNA precursor.. RNA-free RNase P that catalyzes the removal of the 5'-leader sequence from pre-tRNA to produce the mature 5'-terminus. The polypeptide is RNA-free ribonuclease P (Methanococcus maripaludis (strain DSM 14266 / JCM 13030 / NBRC 101832 / S2 / LL)).